Consider the following 63-residue polypeptide: uncharacterized protein (63 aa).

A signal peptide spans 1-15; sequence MRNPVVWGMIYFAVG. Cys-16 carries N-palmitoyl cysteine lipidation. The S-diacylglycerol cysteine moiety is linked to residue Cys-16. A helical membrane pass occupies residues 34 to 56; it reads SILLMVFAAYNISISFKMFAFSF.

The protein resides in the cell membrane. This is an uncharacterized protein from Bacillus subtilis (strain 168).